The chain runs to 1737 residues: Myosin-M heavy chain (1737 aa).

The Myosin N-terminal SH3-like domain maps to 4 to 55 (LEGDIVWVPHTVNGYCRGKIIGYNEKNQVTVRLLELNEEIKINEQLIQNYNQ). Residues 59-886 (KDFSDMVEIQ…LYIYLEKKRY (828 aa)) enclose the Myosin motor domain. Residue 154 to 161 (GESGSGKT) participates in ATP binding. The disordered stretch occupies residues 640–727 (KSNDNNSNNN…NNNSSNNKKS (88 aa)). Low complexity-rich tracts occupy residues 641 to 663 (SNDNNSNNNNSNNNSSSSSSSQS) and 679 to 724 (NSGS…SSNN). The tract at residues 754 to 761 (YIRCIKPN) is actin-binding. IQ domains follow at residues 889–918 (LVDSVLKIQAFFKMIKIRNQYKRNKESSLF) and 912–941 (NKESSLFLQTLIRAQRAKKDFEQLVILENK). Residues 926-1039 (QRAKKDFEQL…KKKNEQNLSL (114 aa)) adopt a coiled-coil conformation. Residues 947–1028 (RKKELERQRK…IEKKRKEEEK (82 aa)) show a composition bias toward basic and acidic residues. Disordered regions lie at residues 947-1099 (RKKE…PSTK), 1117-1199 (LHGS…PNFN), 1266-1290 (GINKPIPQRTISSSENSPLSRANSS), and 1304-1364 (SLST…SNED). A compositionally biased stretch (low complexity) spans 1044–1070 (ITNSPSLINTTTTTTTTTTTTTNTSSP). Over residues 1071–1081 (PLSPPISPRPS) the composition is skewed to pro residues. The span at 1082–1098 (TPSSTSSSSSTTSSPST) shows a compositional bias: low complexity. Residues 1121-1131 (SHSDKNSKEDN) show a composition bias toward basic and acidic residues. Low complexity predominate over residues 1132–1141 (NSNNNNNGDS). Over residues 1143 to 1153 (IILSSDSSFGQ) the composition is skewed to polar residues. Over residues 1162-1171 (PTPPPPPPLK) the composition is skewed to pro residues. Composition is skewed to polar residues over residues 1180 to 1198 (GVENNSSPNLWSHRNSPNF) and 1274 to 1288 (RTISSSENSPLSRAN). The span at 1304–1359 (SLSTSTTPSTPTTPKTPTTLSSSSVSTSTSLSSVSSSVSSSSSSSIPTPIIESTPS) shows a compositional bias: low complexity. The 184-residue stretch at 1389–1572 (FRIKIINELI…SDIVQSINEA (184 aa)) folds into the DH domain. Residues 1603-1714 (TLLMEGTVSA…WFKQIKALIQ (112 aa)) enclose the PH domain.

It belongs to the TRAFAC class myosin-kinesin ATPase superfamily. Myosin family. Monomer.

The protein localises to the cytoplasm. Functionally, myosins are actin-based motor molecules with ATPase activity. Involved in macropinocytosis and remodeling of actin cytoskeleton. This is Myosin-M heavy chain (myoM) from Dictyostelium discoideum (Social amoeba).